Reading from the N-terminus, the 128-residue chain is MSTLVSLPTVAPAPDYQSIDRPLNFSVAAAAKVRELIQEEGNADLALRVYIQGGGCSGFQYGFEFDENRAEDDLAVATDGVTLLVDPLSLQYLMGAEVDYTESLTGAQFVIRNPNAKTTCGCGSSFSV.

Residues Cys56, Cys120, and Cys122 each contribute to the iron-sulfur cluster site.

It belongs to the HesB/IscA family. Homodimer. Requires iron-sulfur cluster as cofactor.

In terms of biological role, required for insertion of 4Fe-4S clusters for at least IspG. The chain is Iron-sulfur cluster insertion protein ErpA from Xanthomonas euvesicatoria pv. vesicatoria (strain 85-10) (Xanthomonas campestris pv. vesicatoria).